A 194-amino-acid polypeptide reads, in one-letter code: Imidazoleglycerol-phosphate dehydratase (194 aa).

Belongs to the imidazoleglycerol-phosphate dehydratase family.

It is found in the cytoplasm. The enzyme catalyses D-erythro-1-(imidazol-4-yl)glycerol 3-phosphate = 3-(imidazol-4-yl)-2-oxopropyl phosphate + H2O. It participates in amino-acid biosynthesis; L-histidine biosynthesis; L-histidine from 5-phospho-alpha-D-ribose 1-diphosphate: step 6/9. The chain is Imidazoleglycerol-phosphate dehydratase from Chloroherpeton thalassium (strain ATCC 35110 / GB-78).